Here is a 573-residue protein sequence, read N- to C-terminus: Phosphoenolpyruvate-protein phosphotransferase (573 aa).

Histidine 190 serves as the catalytic Tele-phosphohistidine intermediate. Phosphoenolpyruvate is bound by residues arginine 297 and arginine 334. The Mg(2+) site is built by glutamate 433 and aspartate 457. Phosphoenolpyruvate is bound by residues 456–457 and arginine 467; that span reads ND. The active-site Proton donor is the cysteine 504.

It belongs to the PEP-utilizing enzyme family. In terms of assembly, homodimer. Requires Mg(2+) as cofactor.

It localises to the cytoplasm. The enzyme catalyses L-histidyl-[protein] + phosphoenolpyruvate = N(pros)-phospho-L-histidyl-[protein] + pyruvate. General (non sugar-specific) component of the phosphoenolpyruvate-dependent sugar phosphotransferase system (sugar PTS). This major carbohydrate active-transport system catalyzes the phosphorylation of incoming sugar substrates concomitantly with their translocation across the cell membrane. Enzyme I transfers the phosphoryl group from phosphoenolpyruvate (PEP) to the phosphoryl carrier protein (HPr). The protein is Phosphoenolpyruvate-protein phosphotransferase (ptsI) of Borreliella burgdorferi (strain ATCC 35210 / DSM 4680 / CIP 102532 / B31) (Borrelia burgdorferi).